The following is a 341-amino-acid chain: tRNA N6-adenosine threonylcarbamoyltransferase (341 aa).

His110 and His114 together coordinate Fe cation. Substrate contacts are provided by residues 133–137 (LVSGG), Asp166, Gly179, and Asn276. Residue Asp304 coordinates Fe cation.

Belongs to the KAE1 / TsaD family. Fe(2+) is required as a cofactor.

Its subcellular location is the cytoplasm. It carries out the reaction L-threonylcarbamoyladenylate + adenosine(37) in tRNA = N(6)-L-threonylcarbamoyladenosine(37) in tRNA + AMP + H(+). Its function is as follows. Required for the formation of a threonylcarbamoyl group on adenosine at position 37 (t(6)A37) in tRNAs that read codons beginning with adenine. Is involved in the transfer of the threonylcarbamoyl moiety of threonylcarbamoyl-AMP (TC-AMP) to the N6 group of A37, together with TsaE and TsaB. TsaD likely plays a direct catalytic role in this reaction. The sequence is that of tRNA N6-adenosine threonylcarbamoyltransferase from Saccharophagus degradans (strain 2-40 / ATCC 43961 / DSM 17024).